A 188-amino-acid polypeptide reads, in one-letter code: Proline-rich protein 3 (188 aa).

The disordered stretch occupies residues 1 to 157 (MPKRKKQNQH…DPQVMEDKSD (157 aa)). Composition is skewed to pro residues over residues 35–46 (IGPPSLLGPPPM) and 69–82 (LIPP…PPWG). Positions 83–96 (RGPIRRGLGPRSSP) are enriched in low complexity. Residues 145–157 (PKDDPQVMEDKSD) show a composition bias toward basic and acidic residues. Residues 155 to 183 (KSDRPVCRHFAKKGHCRYEDLCAFYHPGV) form a C3H1-type zinc finger.

This Pan troglodytes (Chimpanzee) protein is Proline-rich protein 3 (PRR3).